We begin with the raw amino-acid sequence, 360 residues long: Phenylalanine--tRNA ligase alpha subunit (360 aa).

Glu-260 is a binding site for Mg(2+).

It belongs to the class-II aminoacyl-tRNA synthetase family. Phe-tRNA synthetase alpha subunit type 1 subfamily. In terms of assembly, tetramer of two alpha and two beta subunits. The cofactor is Mg(2+).

It is found in the cytoplasm. It carries out the reaction tRNA(Phe) + L-phenylalanine + ATP = L-phenylalanyl-tRNA(Phe) + AMP + diphosphate + H(+). This Bradyrhizobium diazoefficiens (strain JCM 10833 / BCRC 13528 / IAM 13628 / NBRC 14792 / USDA 110) protein is Phenylalanine--tRNA ligase alpha subunit.